A 473-amino-acid chain; its full sequence is Photosystem II CP43 reaction center protein (473 aa).

A propeptide spanning residues 1-14 (MKTLYSLRRFYHVE) is cleaved from the precursor. Thr15 is modified (N-acetylthreonine). Thr15 bears the Phosphothreonine mark. A run of 5 helical transmembrane segments spans residues 69 to 93 (LFEV…PHLA), 134 to 155 (LLGP…KDRN), 178 to 200 (KALY…RKIT), 255 to 275 (KPFA…LSYS), and 291 to 312 (WFNN…ASQA). Position 367 (Glu367) interacts with [CaMn4O5] cluster. The helical transmembrane segment at 447-471 (RARAAAAGFEKGIDRDFEPVLSMTP) threads the bilayer.

It belongs to the PsbB/PsbC family. PsbC subfamily. As to quaternary structure, PSII is composed of 1 copy each of membrane proteins PsbA, PsbB, PsbC, PsbD, PsbE, PsbF, PsbH, PsbI, PsbJ, PsbK, PsbL, PsbM, PsbT, PsbX, PsbY, PsbZ, Psb30/Ycf12, at least 3 peripheral proteins of the oxygen-evolving complex and a large number of cofactors. It forms dimeric complexes. The cofactor is Binds multiple chlorophylls and provides some of the ligands for the Ca-4Mn-5O cluster of the oxygen-evolving complex. It may also provide a ligand for a Cl- that is required for oxygen evolution. PSII binds additional chlorophylls, carotenoids and specific lipids..

It is found in the plastid. The protein resides in the chloroplast thylakoid membrane. In terms of biological role, one of the components of the core complex of photosystem II (PSII). It binds chlorophyll and helps catalyze the primary light-induced photochemical processes of PSII. PSII is a light-driven water:plastoquinone oxidoreductase, using light energy to abstract electrons from H(2)O, generating O(2) and a proton gradient subsequently used for ATP formation. This is Photosystem II CP43 reaction center protein from Nicotiana tabacum (Common tobacco).